We begin with the raw amino-acid sequence, 290 residues long: Glycine--tRNA ligase alpha subunit (290 aa).

The protein belongs to the class-II aminoacyl-tRNA synthetase family. As to quaternary structure, tetramer of two alpha and two beta subunits.

The protein resides in the cytoplasm. The catalysed reaction is tRNA(Gly) + glycine + ATP = glycyl-tRNA(Gly) + AMP + diphosphate. In Brachyspira hyodysenteriae (strain ATCC 49526 / WA1), this protein is Glycine--tRNA ligase alpha subunit.